The primary structure comprises 509 residues: Scavenger receptor class B member 1 (509 aa).

Over M1–A11 the chain is Cytoplasmic. The chain crosses the membrane as a helical span at residues L12 to V32. The Extracellular segment spans residues P33–V440. N-linked (GlcNAc...) asparagine glycosylation is found at N102, N108, N116, N173, N212, N227, N255, N288, N310, N330, and N383. C251 and C384 are oxidised to a cystine. Residues L441–I461 form a helical membrane-spanning segment. C462 is lipidated: S-palmitoyl cysteine. At C462 to L509 the chain is on the cytoplasmic side.

It belongs to the CD36 family. In terms of assembly, the C-terminal region binds to PDZK1. Post-translationally, N-glycosylated. In terms of processing, the six cysteines of the extracellular domain are all involved in intramolecular disulfide bonds. Expressed primarily in liver, ovary and adrenal gland, and, at lower levels in other non-placental steroidogenic tissues, including adipose tissue, mammary gland and testis (at protein level). Isoform 2 is expressed at lower levels than isoform 1 in liver, testis and adrenal gland. At the mRNA, but not at the protein level, isoform 2 is the predominant isoform in testis (80%).

It is found in the cell membrane. Its subcellular location is the membrane. It localises to the caveola. Its function is as follows. Receptor for different ligands such as phospholipids, cholesterol ester, lipoproteins, phosphatidylserine and apoptotic cells. Both isoform 1 and isoform 2 act as receptors for HDL, mediating selective uptake of cholesteryl ether and HDL-dependent cholesterol efflux. Also facilitates the flux of free and esterified cholesterol between the cell surface and apoB-containing lipoproteins and modified lipoproteins, although less efficiently than HDL. May be involved in the phagocytosis of apoptotic cells, via its phosphatidylserine binding activity. The sequence is that of Scavenger receptor class B member 1 (Scarb1) from Mus musculus (Mouse).